Reading from the N-terminus, the 2374-residue chain is Genome polyprotein (2374 aa).

Residue glycine 115 is the site of N-myristoyl glycine; by host attachment. Disordered regions lie at residues 144–176 (GDMPTASTSEAPLGSNKGGSSTSPKSTSNGNVV) and 707–739 (GADGAEVQPAPTSDLSDGNPTTDPAPRDNFDYP). Residues 157 to 174 (GSNKGGSSTSPKSTSNGN) show a composition bias toward low complexity. A compositionally biased stretch (polar residues) spans 716–728 (APTSDLSDGNPTT). The 165-residue stretch at 1361-1525 (YSTALSAISL…VAFSAAAALQ (165 aa)) folds into the SF3 helicase domain. An ATP-binding site is contributed by 1387–1394 (GPPGTGKS). A lipid anchor (N-myristoyl glycine; by host) is attached at glycine 1600. The helical transmembrane segment at 1649–1669 (IFAASSFLSLIAATLTIVRCL) threads the bilayer. Residues 1677 to 1699 (GAYSGTPVPKPRKKDLPKQPVYS) are disordered. Tyrosine 1679 carries the post-translational modification O-(5'-phospho-RNA)-tyrosine. Residues 1700–1889 (GPVRRQGFDP…FSARLTPERV (190 aa)) form the Peptidase C3 domain. Active-site for protease 3C activity residues include histidine 1748, glutamate 1779, and cysteine 1852. Residues 2126–2243 (SNVWSIDYSC…GSNQDFHPRE (118 aa)) enclose the RdRp catalytic domain. Residues aspartate 2132 and aspartate 2229 each act as for RdRp activity in the active site.

Interacts with capsid protein VP1. Interacts with capsid protein VP3. In terms of assembly, interacts with capsid protein VP0. Interacts with capsid protein VP3. As to quaternary structure, interacts with capsid protein VP0. Interacts with capsid protein VP1. Homodimer. Interacts with protein 2B. Interacts with protein 2C. In terms of assembly, homodimer. Interacts with host ABCD3. Interacts with protein 2A. Interacts with host ACBD3. As to quaternary structure, homodimer. Interacts with host ABCD3. Interacts with protein 2A. Interacts with protein 3A. Interacts with protein 3C. Interacts with host ACBD3. Homodimer. Interacts with host ABCD3 (via GOLD domain) and PI4KB; these interactions allow the formation of a viral protein/ACBD3/PI4KB complex in order to synthesize PI4P at the viral RNA replication sites. Interacts with protein 2C. Interacts with protein 3C. Protein 3C: Interacts with protein 2A. Protein 3C: Interacts with protein 2C. Post-translationally, specific enzymatic cleavages by the viral protease in vivo yield a variety of precursors and mature proteins. The leader protein-VP0 junction is cleaved by 3C proteinase. The VP1/2A junction is cleaved by the protein 3CD in association with protein 2A. Uridylylated by the polymerase and is covalently linked to the 5'-end of genomic RNA. This uridylylated form acts as a nucleotide-peptide primer for the polymerase.

It localises to the virion. The protein localises to the host cytoplasm. Its subcellular location is the host cytoplasmic vesicle membrane. The protein resides in the host Golgi apparatus membrane. The enzyme catalyses Selective cleavage of Gln-|-Gly bond in the poliovirus polyprotein. In other picornavirus reactions Glu may be substituted for Gln, and Ser or Thr for Gly.. The catalysed reaction is RNA(n) + a ribonucleoside 5'-triphosphate = RNA(n+1) + diphosphate. It carries out the reaction ATP + H2O = ADP + phosphate + H(+). Required for viral RNA replication and viral RNA encapsidation. Does not have any proteolytic activity. In terms of biological role, forms an icosahedral capsid of pseudo T=3 symmetry with capsid proteins VP0 and VP3. Together they form an icosahedral capsid composed of 60 copies of each VP0, VP1, and VP3. All the three latter proteins contain a beta-sheet structure called beta-barrel jelly roll. Its function is as follows. Forms an icosahedral capsid of pseudo T=3 symmetry with capsid proteins VP1 and VP3. Together they form an icosahedral capsid composed of 60 copies of each VP0, VP1, and VP3. All the three latter proteins contain a beta-sheet structure called beta-barrel jelly roll. Functionally, forms an icosahedral capsid of pseudo T=3 symmetry with capsid proteins VP0 and VP1. Together they form an icosahedral capsid composed of 60 copies of each VP0, VP1, and VP3. All the three latter proteins contain a beta-sheet structure called beta-barrel jelly roll. Required for viral RNA replication. Does not have any proteolytic activity. In terms of biological role, affects membrane integrity and causes an increase in membrane permeability. Its function is as follows. Induces and associates with structural rearrangements of intracellular membranes. Displays RNA-binding, nucleotide binding and NTPase activities. May play a role in virion morphogenesis and viral RNA encapsidation by interacting with the capsid protein VP3. Functionally, serves as membrane anchor via its hydrophobic domain. Plays an essential role in viral RNA replication by recruiting PI4KB at the viral replication sites, thereby allowing the formation of rearranged membranous structures where viral replication takes place. Forms a primer, VPg-pU, which is utilized by the polymerase for the initiation of RNA chains. In terms of biological role, cysteine protease that generates mature viral proteins from the precursor polyprotein. In addition to its proteolytic activity, it binds to viral RNA, and thus influences viral genome replication. RNA and substrate cooperatively bind to the protease. Its function is as follows. Replicates the genomic and antigenomic RNAs by recognizing replications specific signals. Performs VPg uridylylation. The sequence is that of Genome polyprotein from Salivirus A (isolate Human/Nigeria/NG-J1/2007) (SV-A).